Here is a 115-residue protein sequence, read N- to C-terminus: Putative membrane protein insertion efficiency factor (115 aa).

This sequence belongs to the UPF0161 family.

It localises to the cell membrane. In terms of biological role, could be involved in insertion of integral membrane proteins into the membrane. This chain is Putative membrane protein insertion efficiency factor, found in Mycolicibacterium paratuberculosis (strain ATCC BAA-968 / K-10) (Mycobacterium paratuberculosis).